We begin with the raw amino-acid sequence, 151 residues long: MLFNQRRGISPAALIIGSTMLITALSPQIRQRISGFITGQMNRRNSENNTFDASNVGNMVKQAFSGSSGSSGDNQDRSQHQSQRQNGRQHQHAGQQQPQHQHTQSQTRQTETAAKKRQPHYAEPIHFEQNAMNVMDDNTMMEMLEDLEPGR.

Polar residues predominate over residues Gln-40 to Gly-57. A disordered region spans residues Gln-40–Ile-125. Positions Gln-83–Thr-110 are enriched in low complexity.

This is an uncharacterized protein from Bacillus subtilis (strain 168).